A 305-amino-acid polypeptide reads, in one-letter code: ATP synthase subunit gamma, mitochondrial (305 aa).

Belongs to the ATPase gamma chain family. F-type ATPases have 2 components, F(1) - the catalytic core - and F(o) - the membrane proton channel. F(1) has five subunits: alpha(3), beta(3), gamma(1), delta(1), epsilon(1), plus the additional subunit P18 (Tb427.05.1710) that is not present in F(1)F(o) ATP synthase from metazoa. Subunit P18 (Tb927.5.1710) interacts with the alpha subunit with a 1:1 stoichiometry; the interaction is direct. Subunit gamma is part of the central stalk. F(o) has three main subunits: a, b and c. The trypanosomal ATPase complex contains additional subunits that are not present in the F(1)F(o) ATP synthase from metazoa.

It is found in the mitochondrion. It localises to the mitochondrion inner membrane. In terms of biological role, mitochondrial membrane ATP synthase (F(1)F(o) ATP synthase) produces ATP from ADP in the presence of a proton gradient across the membrane which is generated by electron transport complexes of the respiratory chain. F-type ATPases consist of two structural domains, F(1) - containing the extramembraneous catalytic core, and F(o) - containing the membrane proton channel, linked together by a central stalk and a peripheral stalk. During catalysis, ATP synthesis in the catalytic domain of F(1) is coupled via a rotary mechanism of the central stalk subunits to proton translocation. Subunits alpha and beta form the catalytic core in F(1). Rotation of the central stalk against the surrounding alpha(3)beta(3) subunits leads to hydrolysis of ATP in three separate catalytic sites on the beta subunits. Contrary to the procyclic, insect form that requires F(1)F(o) ATP synthase for ATP synthesis, the bloodstream form relies on ATP hydrolysis by F(1)F(o) ATP synthase to maintain its mitochondrial membrane potential. The protein is ATP synthase subunit gamma, mitochondrial of Trypanosoma brucei brucei.